Consider the following 171-residue polypeptide: ATP synthase subunit b (171 aa).

Residues 26 to 46 (INLVLVIALLVYFLKGFLGGI) form a helical membrane-spanning segment.

The protein belongs to the ATPase B chain family. F-type ATPases have 2 components, F(1) - the catalytic core - and F(0) - the membrane proton channel. F(1) has five subunits: alpha(3), beta(3), gamma(1), delta(1), epsilon(1). F(0) has four main subunits: a(1), b(1), b'(1) and c(10-14). The alpha and beta chains form an alternating ring which encloses part of the gamma chain. F(1) is attached to F(0) by a central stalk formed by the gamma and epsilon chains, while a peripheral stalk is formed by the delta, b and b' chains.

Its subcellular location is the cellular thylakoid membrane. Its function is as follows. F(1)F(0) ATP synthase produces ATP from ADP in the presence of a proton or sodium gradient. F-type ATPases consist of two structural domains, F(1) containing the extramembraneous catalytic core and F(0) containing the membrane proton channel, linked together by a central stalk and a peripheral stalk. During catalysis, ATP synthesis in the catalytic domain of F(1) is coupled via a rotary mechanism of the central stalk subunits to proton translocation. In terms of biological role, component of the F(0) channel, it forms part of the peripheral stalk, linking F(1) to F(0). This Synechococcus sp. (strain RCC307) protein is ATP synthase subunit b.